Consider the following 356-residue polypeptide: Thymidine kinase (356 aa).

The tract at residues 1-29 is disordered; that stretch reads MMDSRATYVPPKKISESNSNAEEDPTDCS. Residue 61–68 participates in ATP binding; that stretch reads GCVGVGKT. Glutamate 86 serves as the catalytic Proton acceptor. Glutamine 122 provides a ligand contact to substrate. Arginine 208 is a binding site for ATP. Residue arginine 214 coordinates substrate.

This sequence belongs to the herpesviridae thymidine kinase family. Homodimer.

The catalysed reaction is thymidine + ATP = dTMP + ADP + H(+). In terms of biological role, catalyzes the transfer of the gamma-phospho group of ATP to thymidine to generate dTMP in the salvage pathway of pyrimidine synthesis. The dTMP serves as a substrate for DNA polymerase during viral DNA replication. Allows the virus to be reactivated and to grow in non-proliferative cells lacking a high concentration of phosphorylated nucleic acid precursors. This chain is Thymidine kinase, found in Elephas maximus (Indian elephant).